Consider the following 143-residue polypeptide: Large ribosomal subunit protein uL11 (143 aa).

The protein belongs to the universal ribosomal protein uL11 family. In terms of assembly, part of the ribosomal stalk of the 50S ribosomal subunit. Interacts with L10 and the large rRNA to form the base of the stalk. L10 forms an elongated spine to which L12 dimers bind in a sequential fashion forming a multimeric L10(L12)X complex. Post-translationally, one or more lysine residues are methylated.

Its function is as follows. Forms part of the ribosomal stalk which helps the ribosome interact with GTP-bound translation factors. The protein is Large ribosomal subunit protein uL11 of Burkholderia mallei (strain NCTC 10247).